The chain runs to 418 residues: Beta-arrestin-1 (418 aa).

An interaction with SRC region spans residues 1–163 (MGDKGTRVFK…LEEKIHKRNS (163 aa)). An interaction with CHRM2 region spans residues 45 to 86 (PEYLKERRVYVTLTCAFRYGREDLDVLGLTFRKDLFVANVQS). Tyr47 bears the Phosphotyrosine mark. 1D-myo-inositol hexakisphosphate contacts are provided by Lys250, Met255, Lys324, and Lys326. Residues 318-418 (IVSYKVKVKL…GTGSPHLNNR (101 aa)) are interaction with TRAF6. 2 disordered regions span residues 353 to 374 (HPKP…PVDT) and 397 to 418 (KGMK…LNNR). Residues 355–366 (KPKEEPPHREVP) show a composition bias toward basic and acidic residues. Residue Ser412 is modified to Phosphoserine. A Phosphoserine; by GRK5 modification is found at Ser412.

The protein belongs to the arrestin family. As to quaternary structure, monomer. Homodimer. Homooligomer; the self-association is mediated by InsP6-binding. Heterooligomer with ARRB2; the association is mediated by InsP6-binding. Interacts with ADRB2 (phosphorylated). Interacts with CHRM2 (phosphorylated). Interacts with LHCGR. Interacts with CYTH2 and CASR. Interacts with AP2B1 (dephosphorylated at 'Tyr-737'); phosphorylation of AP2B1 at 'Tyr-737' disrupts the interaction. Interacts (dephosphorylated at Ser-412) with CLTC. Interacts with CCR2 and GRK2. Interacts with CRR5. Interacts with PTAFR (phosphorylated on serine residues). Interacts with CLTC and MAP2K3. Interacts with CREB1. Interacts with TRAF6. Interacts with IGF1R and MDM2. Interacts with C5AR1. Interacts with PDE4D. Interacts with SRC (via the SH3 domain and the protein kinase domain); the interaction is independent of the phosphorylation state of SRC C-terminus. Interacts with TACR1. Interacts with RAF1. Interacts with CHUK, IKBKB and MAP3K14. Interacts with DVL1; the interaction is enhanced by phosphorylation of DVL1. Interacts with DVL2; the interaction is enhanced by phosphorylation of DVL2. Interacts with IGF1R. Associates with MAP kinase p38. Part of a MAPK signaling complex consisting of TACR1, ARRB1, SRC, MAPK1 (activated) and MAPK3 (activated). Part of a MAPK signaling complex consisting of F2RL1, ARRB1, RAF1, MAPK1 (activated) and MAPK3 (activated). Interacts with GPR143. Interacts with MAP2K4/MKK4. Interacts with HCK and CXCR1 (phosphorylated). Interacts with ACKR3 and ACKR4. Interacts with ARRDC1; the interaction is direct. Interacts with GPR61, GPR62 and GPR135. Post-translationally, constitutively phosphorylated at Ser-412 in the cytoplasm. At the plasma membrane, is rapidly dephosphorylated, a process that is required for clathrin binding and beta-2 adrenergic receptor/ADRB2 endocytosis but not for ADRB2 binding and desensitization. Once internalized, is rephosphorylated. The ubiquitination status appears to regulate the formation and trafficking of beta-arrestin-GPCR complexes and signaling. Ubiquitination appears to occur GPCR-specific. Ubiquitinated by MDM2; the ubiquitination is required for rapid internalization of ADRB2. Deubiquitinated by USP33; the deubiquitination leads to a dissociation of the beta-arrestin-GPCR complex. Stimulation of a class A GPCR, such as ADRB2, induces transient ubiquitination and subsequently promotes association with USP33. Predominantly localized in neuronal tissues and in the spleen.

It localises to the cytoplasm. It is found in the nucleus. Its subcellular location is the cell membrane. The protein resides in the membrane. The protein localises to the clathrin-coated pit. It localises to the cell projection. It is found in the pseudopodium. Its subcellular location is the cytoplasmic vesicle. Functions in regulating agonist-mediated G-protein coupled receptor (GPCR) signaling by mediating both receptor desensitization and resensitization processes. During homologous desensitization, beta-arrestins bind to the GPRK-phosphorylated receptor and sterically preclude its coupling to the cognate G-protein; the binding appears to require additional receptor determinants exposed only in the active receptor conformation. The beta-arrestins target many receptors for internalization by acting as endocytic adapters (CLASPs, clathrin-associated sorting proteins) and recruiting the GPRCs to the adapter protein 2 complex 2 (AP-2) in clathrin-coated pits (CCPs). However, the extent of beta-arrestin involvement appears to vary significantly depending on the receptor, agonist and cell type. Internalized arrestin-receptor complexes traffic to intracellular endosomes, where they remain uncoupled from G-proteins. Two different modes of arrestin-mediated internalization occur. Class A receptors, like ADRB2, OPRM1, ENDRA, D1AR and ADRA1B dissociate from beta-arrestin at or near the plasma membrane and undergo rapid recycling. Class B receptors, like AVPR2, AGTR1, NTSR1, TRHR and TACR1 internalize as a complex with arrestin and traffic with it to endosomal vesicles, presumably as desensitized receptors, for extended periods of time. Receptor resensitization then requires that receptor-bound arrestin is removed so that the receptor can be dephosphorylated and returned to the plasma membrane. Involved in internalization of P2RY4 and UTP-stimulated internalization of P2RY2. Involved in phosphorylation-dependent internalization of OPRD1 ands subsequent recycling. Involved in the degradation of cAMP by recruiting cAMP phosphodiesterases to ligand-activated receptors. Beta-arrestins function as multivalent adapter proteins that can switch the GPCR from a G-protein signaling mode that transmits short-lived signals from the plasma membrane via small molecule second messengers and ion channels to a beta-arrestin signaling mode that transmits a distinct set of signals that are initiated as the receptor internalizes and transits the intracellular compartment. Acts as a signaling scaffold for MAPK pathways such as MAPK1/3 (ERK1/2). ERK1/2 activated by the beta-arrestin scaffold is largely excluded from the nucleus and confined to cytoplasmic locations such as endocytic vesicles, also called beta-arrestin signalosomes. Recruits c-Src/SRC to ADRB2 resulting in ERK activation. GPCRs for which the beta-arrestin-mediated signaling relies on both ARRB1 and ARRB2 (codependent regulation) include ADRB2, F2RL1 and PTH1R. For some GPCRs the beta-arrestin-mediated signaling relies on either ARRB1 or ARRB2 and is inhibited by the other respective beta-arrestin form (reciprocal regulation). Inhibits ERK1/2 signaling in AGTR1- and AVPR2-mediated activation (reciprocal regulation). Is required for SP-stimulated endocytosis of NK1R and recruits c-Src/SRC to internalized NK1R resulting in ERK1/2 activation, which is required for the antiapoptotic effects of SP. Is involved in proteinase-activated F2RL1-mediated ERK activity. Acts as a signaling scaffold for the AKT1 pathway. Is involved in alpha-thrombin-stimulated AKT1 signaling. Is involved in IGF1-stimulated AKT1 signaling leading to increased protection from apoptosis. Involved in activation of the p38 MAPK signaling pathway and in actin bundle formation. Involved in F2RL1-mediated cytoskeletal rearrangement and chemotaxis. Involved in AGTR1-mediated stress fiber formation by acting together with GNAQ to activate RHOA. Appears to function as signaling scaffold involved in regulation of MIP-1-beta-stimulated CCR5-dependent chemotaxis. Involved in attenuation of NF-kappa-B-dependent transcription in response to GPCR or cytokine stimulation by interacting with and stabilizing CHUK. May serve as nuclear messenger for GPCRs. Involved in OPRD1-stimulated transcriptional regulation by translocating to CDKN1B and FOS promoter regions and recruiting EP300 resulting in acetylation of histone H4. Involved in regulation of LEF1 transcriptional activity via interaction with DVL1 and/or DVL2 Also involved in regulation of receptors other than GPCRs. Involved in Toll-like receptor and IL-1 receptor signaling through the interaction with TRAF6 which prevents TRAF6 autoubiquitination and oligomerization required for activation of NF-kappa-B and JUN. Binds phosphoinositides. Binds inositolhexakisphosphate (InsP6). Involved in IL8-mediated granule release in neutrophils. Required for atypical chemokine receptor ACKR2-induced RAC1-LIMK1-PAK1-dependent phosphorylation of cofilin (CFL1) and for the up-regulation of ACKR2 from endosomal compartment to cell membrane, increasing its efficiency in chemokine uptake and degradation. Involved in the internalization of the atypical chemokine receptor ACKR3. Negatively regulates the NOTCH signaling pathway by mediating the ubiquitination and degradation of NOTCH1 by ITCH. Participates in the recruitment of the ubiquitin-protein ligase to the receptor. The polypeptide is Beta-arrestin-1 (Rattus norvegicus (Rat)).